The following is a 193-amino-acid chain: MSMSQPSIDFSASSVDVARSLIGATLLVNGVGGRIVETEAYDHDDPASHSFSGPTRRNQVMFGPPCHAYIYRSYGIHWCLNFVCRPAGHGAGVLIRAIEPLVGLDIMRKRRGLSDERLLCSGPGRVCEALGITQEYSGMSIDTPPFQLTPPLDPVPVVTGPRIGISKAKDVPWRFGLAGSPFLSRPFRQPDIV.

It belongs to the DNA glycosylase MPG family.

The sequence is that of Putative 3-methyladenine DNA glycosylase from Nitrosospira multiformis (strain ATCC 25196 / NCIMB 11849 / C 71).